The following is a 244-amino-acid chain: NAD-dependent protein deacetylase (244 aa).

A Deacetylase sirtuin-type domain is found at 1 to 244 (MTGEQLAHWI…LSAVQRAVMP (244 aa)). The NAD(+) site is built by A22, T26, F33, R34, Q103, I105, D106, and H121. F33 contributes to the nicotinamide binding site. I105 and D106 together coordinate nicotinamide. The active-site Proton acceptor is H121. Zn(2+) is bound by residues C129, C132, C150, and C152. Positions 190, 191, 213, and 231 each coordinate NAD(+).

Belongs to the sirtuin family. Class U subfamily. Zn(2+) serves as cofactor.

The protein resides in the cytoplasm. It catalyses the reaction N(6)-acetyl-L-lysyl-[protein] + NAD(+) + H2O = 2''-O-acetyl-ADP-D-ribose + nicotinamide + L-lysyl-[protein]. Functionally, NAD-dependent protein deacetylase which modulates the activities of several enzymes which are inactive in their acetylated form. In Cutibacterium acnes (strain DSM 16379 / KPA171202) (Propionibacterium acnes), this protein is NAD-dependent protein deacetylase.